The following is a 404-amino-acid chain: Proteasomal ubiquitin receptor ADRM1-A (404 aa).

The 114-residue stretch at 17-130 (SSSKYLVEFR…RKLNEYLNNP (114 aa)) folds into the Pru domain. Residues 195 to 247 (GSGGPTTSSSSSSSRSQSAAVTPSSTTSSTRTTSAPVAPAAAPATTPSPAVSS) are compositionally biased toward low complexity. Disordered stretches follow at residues 195-258 (GSGG…TSPT) and 376-404 (FAKA…MSLD). Polar residues predominate over residues 248–258 (NDGASEATSPT). The DEUBAD domain maps to 278–390 (TGEGGQQVDL…QSTSSQKERE (113 aa)). A compositionally biased stretch (basic and acidic residues) spans 386–395 (QKERESSEKK).

Belongs to the ADRM1 family. Component of the 19S proteasome regulatory particle complex. The 26S proteasome consists of a 20S core particle (CP) and two 19S regulatory subunits (RP).

The protein localises to the cytoplasm. It localises to the nucleus. In terms of biological role, component of the 26S proteasome, a multiprotein complex involved in the ATP-dependent degradation of ubiquitinated proteins. This complex plays a key role in the maintenance of protein homeostasis by removing misfolded or damaged proteins, which could impair cellular functions, and by removing proteins whose functions are no longer required. Therefore, the proteasome participates in numerous cellular processes, including cell cycle progression, apoptosis, or DNA damage repair. Within the complex, functions as a proteasomal ubiquitin receptor. This is Proteasomal ubiquitin receptor ADRM1-A (adrm1-a) from Xenopus laevis (African clawed frog).